Consider the following 199-residue polypeptide: Recombination protein RecR (199 aa).

Residues 57-72 (CSICGNITESDPCEIC) form a C4-type zinc finger. The Toprim domain maps to 80–176 (STIMVVEQPK…KVTRLAAGLA (97 aa)).

The protein belongs to the RecR family.

In terms of biological role, may play a role in DNA repair. It seems to be involved in an RecBC-independent recombinational process of DNA repair. It may act with RecF and RecO. The protein is Recombination protein RecR of Lactobacillus johnsonii (strain CNCM I-12250 / La1 / NCC 533).